The sequence spans 481 residues: Glutamyl-tRNA(Gln) amidotransferase subunit A (481 aa).

Active-site charge relay system residues include lysine 74 and serine 149. Residue serine 173 is the Acyl-ester intermediate of the active site.

The protein belongs to the amidase family. GatA subfamily. In terms of assembly, heterotrimer of A, B and C subunits.

The catalysed reaction is L-glutamyl-tRNA(Gln) + L-glutamine + ATP + H2O = L-glutaminyl-tRNA(Gln) + L-glutamate + ADP + phosphate + H(+). Allows the formation of correctly charged Gln-tRNA(Gln) through the transamidation of misacylated Glu-tRNA(Gln) in organisms which lack glutaminyl-tRNA synthetase. The reaction takes place in the presence of glutamine and ATP through an activated gamma-phospho-Glu-tRNA(Gln). In Francisella tularensis subsp. tularensis (strain WY96-3418), this protein is Glutamyl-tRNA(Gln) amidotransferase subunit A.